The primary structure comprises 1136 residues: MLCPWQFAFKPHAVKNQSSEEKDINNNVEKDVKVHSFVKDDAKLHSLSKKQMKMSPIITSAEKHPQNGIKASNQISRCPRHVKVRNMENGSSLLDTLHLTAKEVINCRTRACQGALMTPKGLVRSTRDGPVPPAELLPQAVDFVKQYYSSFKELKIEEHLARLETVTKEIETTGTYHLTKDELIFAAKQAWRNAPRCIGRIQWSNLQVFDARDCKTAKEMFEYICRHIQYATNNGNIRSAITIFPQRTDGKHDFRVWNSQLIRYAGYQMPDGSVIGDPASVEFTKLCIELGWKPKYGRFDVVPLILQANGQDPEIFEYPPEIILEVPMEHPKYEWFKELDLKWYALPAVANMLLEVGGLEFTACPFNGWYMGTEIGVRDFCDVQRYNILKEVGRRMGLESNKLASLWKDRAVVEINVAVLHSFQKQNVTIMDHHSAAESFMKYMQNEYRVRGGCPADWVWIVPPMSGSITPVFHQEMLNYVLTPFFYYQVDAWKTHIWHDETRRPKKREIKLSILAKAVLLASLLLQKTMAARPKVTVIYATETGKSETLANSLCSLFSCAFNTKILCMDEYNISDLEKETLLLVVTSTFGNGDSPNNGKTLKNSLLTLKLLRKNIRYAVFGLGSTMYPEFCAFAHAIDQKLSQLGALQLTPVGEGDELNGQEEAFRTWAVTAFKTACDIFDIRGKNSIQLPEIYTSDDSWNPKKHRIVYDSQTMDLTKALSDIHGKNVIPMKLKFRQNLQSLKSSRVTILVKLSCETNQEVHYLPGEHIGISPGNQPELVHGLIARVKDAPPADQTIRLETCTEGGYWASEKKIPACTLSQALTYLLDITTPPTQQLLKKLSQLVTAEGDKQRLEVLCHSTEEYNKWKFYNRPNILEVLEEFPSAEVSTAFLLTQLPLLKPRYYSVSSSCDMTPREIHLTVAVVNYRTRDGQGPLHHGVCSTWLNKIALNETVPCFVRSADGFRLPKEPAKPCILIGPGTGIAPFRSFWQQRLYDLEKKGIKGGDMILLFGCRHPDMDHIYKEEVEEMKRKGVLKEVFTAYSRQPGQPKVYVQDILQNELETKVCNILHKEEGHLYVCGDVRMARDVAQTLKRMLVKKLNHTEQQAEEYFFQLKSQKRYHEDIFGAVFPHEVKRI.

C107 and C112 together coordinate Zn(2+). Residue C197 coordinates heme b. Residues Q260, W369, Y370, and E374 each contribute to the L-arginine site. (6R)-L-erythro-5,6,7,8-tetrahydrobiopterin is bound by residues R378, V459, W460, and F473. Y488 contributes to the heme b binding site. Residues 512–532 (LSILAKAVLLASLLLQKTMAA) form a calmodulin-binding region. Positions 536-674 (VTVIYATETG…AFRTWAVTAF (139 aa)) constitute a Flavodoxin-like domain. Positions 542, 543, 544, 546, 547, 588, 589, 625, 632, 658, and 662 each coordinate FMN. One can recognise an FAD-binding FR-type domain in the interval 727–967 (KNVIPMKLKF…VRSADGFRLP (241 aa)). R747 is a binding site for NADP(+). H769, R903, Y905, S906, T921, A923, Y927, V940, C941, and S942 together coordinate FAD. Residues T981, R1014, S1043, R1044, K1050, Y1052, Q1054, and D1087 each coordinate NADP(+).

Belongs to the NOS family. Homodimer. The cofactor is heme b. FAD serves as cofactor. FMN is required as a cofactor. Requires (6R)-L-erythro-5,6,7,8-tetrahydrobiopterin as cofactor.

It is found in the cytoplasm. The protein resides in the cytosol. It carries out the reaction 2 L-arginine + 3 NADPH + 4 O2 + H(+) = 2 L-citrulline + 2 nitric oxide + 3 NADP(+) + 4 H2O. Its activity is regulated as follows. Not stimulated by calcium/calmodulin. In terms of biological role, produces nitric oxide (NO) which is a messenger molecule with diverse functions throughout the body. NO may serve as both a paracrine and autocrine signal for modulating osteoclast bone resorption. Also has nitrosylase activity and mediates cysteine S-nitrosylation of cytoplasmic target proteins such COX2. In Gallus gallus (Chicken), this protein is Nitric oxide synthase, inducible (NOS2).